We begin with the raw amino-acid sequence, 538 residues long: Methionine--tRNA ligase (538 aa).

Residues 21–31 (YYVNDAPHLGH) carry the 'HIGH' region motif. Cys-137, Cys-140, Cys-162, and His-165 together coordinate Zn(2+). Positions 313–317 (KMSKS) match the 'KMSKS' region motif. Position 316 (Lys-316) interacts with ATP.

Belongs to the class-I aminoacyl-tRNA synthetase family. MetG type 2A subfamily. As to quaternary structure, monomer. It depends on Zn(2+) as a cofactor.

It is found in the cytoplasm. It carries out the reaction tRNA(Met) + L-methionine + ATP = L-methionyl-tRNA(Met) + AMP + diphosphate. Is required not only for elongation of protein synthesis but also for the initiation of all mRNA translation through initiator tRNA(fMet) aminoacylation. This chain is Methionine--tRNA ligase, found in Streptomyces coelicolor (strain ATCC BAA-471 / A3(2) / M145).